Here is a 237-residue protein sequence, read N- to C-terminus: Uridylate kinase (237 aa).

10–13 is a binding site for ATP; sequence KLSG. Gly-51 contacts UMP. Residues Gly-52 and Arg-56 each coordinate ATP. UMP contacts are provided by residues Asp-71 and 132–139; that span reads MGMPFFST. ATP is bound by residues Asn-160, Tyr-166, and Asp-169.

Belongs to the UMP kinase family. As to quaternary structure, homohexamer.

Its subcellular location is the cytoplasm. The catalysed reaction is UMP + ATP = UDP + ADP. The protein operates within pyrimidine metabolism; CTP biosynthesis via de novo pathway; UDP from UMP (UMPK route): step 1/1. Inhibited by UTP. Catalyzes the reversible phosphorylation of UMP to UDP. The polypeptide is Uridylate kinase (Nocardioides sp. (strain ATCC BAA-499 / JS614)).